We begin with the raw amino-acid sequence, 131 residues long: MLLLNQTLATTEKQTALQAAEKFVDELCISYSAKKGRGYARKRQKNLLATLQAYKPQNPKDAPVNCDKCGKPGNVKNDCPGSMRKPARPCPICGGDHWRVDCPQRCRSLGPKPVSQVSNRIDGPQGSCPWL.

Residues 64 to 81 form a CCHC-type; degenerate zinc finger; that stretch reads VNCDKCGKPGNVKNDCPG.

This is an uncharacterized protein from Homo sapiens (Human).